We begin with the raw amino-acid sequence, 140 residues long: Desampylase (140 aa).

The region spanning 13-133 is the MPN domain; it reads TLIIPQHYLR…WILSEKNKIS (121 aa). Glu-34 acts as the Proton donor/acceptor in catalysis. Zn(2+)-binding residues include His-88, His-90, and Asp-101. Positions 88–101 match the JAMM motif motif; it reads HSHIACPPIPSGKD.

This sequence belongs to the peptidase M67B family. As to quaternary structure, exists in two major states: monomer and homodimer. Both conformational states are catalytically active. The cofactor is Zn(2+). In terms of processing, the disulfide bridge probably stabilizes the PfJAMM1 homodimer at the optimal growth temperature of the hyperthermophile.

It catalyses the reaction an N(6)-[small archaeal modifier protein]-[protein]-L-lysine + H2O = a [protein]-L-lysine + a [small archaeal modifier protein].. Its activity is regulated as follows. Inhibited by EDTA in vitro. Functionally, metalloprotease that displays desampylase (DSAMP) activity, cleaving ubiquitin-like small archaeal modifier proteins (SAMP1, SAMP2 and SAMP3) from protein conjugates (isopeptide- and linear-linked). Thus, likely regulates sampylation and the pools of 'free' SAMP available for protein modification. In vitro, is also able to cleave non-physiological ubiquitin (Ub) substrates, such as 'Met1-', 'Lys48-', and 'Lys63'-linked Ub dimers (Ub2), and to remove Ub tags from diverse proteins. The protein is Desampylase of Pyrococcus furiosus (strain ATCC 43587 / DSM 3638 / JCM 8422 / Vc1).